Here is a 205-residue protein sequence, read N- to C-terminus: Beta-crystallin B2 (205 aa).

A2 bears the N-acetylalanine mark. The N-terminal arm stretch occupies residues 2–16 (ASDHQTQAGKPQPLN). Beta/gamma crystallin 'Greek key' domains follow at residues 17–56 (PKII…LVQA) and 57–101 (GPWV…RPIK). Residues 102-106 (VDSQE) form a connecting peptide region. Beta/gamma crystallin 'Greek key' domains follow at residues 107 to 148 (HKII…RVQS) and 149 to 191 (GTWV…RRIR). Residues 193–205 (MQWHQRGAFHPTN) are C-terminal arm.

It belongs to the beta/gamma-crystallin family. Homo/heterodimer, or complexes of higher-order. The structure of beta-crystallin oligomers seems to be stabilized through interactions between the N-terminal arms.

Crystallins are the dominant structural components of the vertebrate eye lens. The protein is Beta-crystallin B2 (CRYBB2) of Oryctolagus cuniculus (Rabbit).